Here is a 359-residue protein sequence, read N- to C-terminus: Probable dual-specificity RNA methyltransferase RlmN (359 aa).

The active-site Proton acceptor is the Glu93. One can recognise a Radical SAM core domain in the interval 107 to 337; sequence KSERVTLCVS…VTMRYEKGHD (231 aa). Residues Cys114 and Cys342 are joined by a disulfide bond. Positions 121, 125, and 128 each coordinate [4Fe-4S] cluster. Residues 168-169, Ser200, 223-225, and Asn299 each bind S-adenosyl-L-methionine; these read GE and SLH. Cys342 acts as the S-methylcysteine intermediate in catalysis.

The protein belongs to the radical SAM superfamily. RlmN family. It depends on [4Fe-4S] cluster as a cofactor.

It localises to the cytoplasm. It catalyses the reaction adenosine(2503) in 23S rRNA + 2 reduced [2Fe-2S]-[ferredoxin] + 2 S-adenosyl-L-methionine = 2-methyladenosine(2503) in 23S rRNA + 5'-deoxyadenosine + L-methionine + 2 oxidized [2Fe-2S]-[ferredoxin] + S-adenosyl-L-homocysteine. The catalysed reaction is adenosine(37) in tRNA + 2 reduced [2Fe-2S]-[ferredoxin] + 2 S-adenosyl-L-methionine = 2-methyladenosine(37) in tRNA + 5'-deoxyadenosine + L-methionine + 2 oxidized [2Fe-2S]-[ferredoxin] + S-adenosyl-L-homocysteine. Its function is as follows. Specifically methylates position 2 of adenine 2503 in 23S rRNA and position 2 of adenine 37 in tRNAs. The chain is Probable dual-specificity RNA methyltransferase RlmN from Akkermansia muciniphila (strain ATCC BAA-835 / DSM 22959 / JCM 33894 / BCRC 81048 / CCUG 64013 / CIP 107961 / Muc).